Consider the following 449-residue polypeptide: Pentalenene oxygenase (449 aa).

The chain crosses the membrane as a helical span at residues 251–273 (VITVMAAGTETVAGTLTWIFHLL). Cys-393 is a heme binding site.

This sequence belongs to the cytochrome P450 family.

The protein resides in the membrane. The enzyme catalyses pentalenene + 4 reduced [2Fe-2S]-[ferredoxin] + 2 O2 + 4 H(+) = pentalen-13-al + 4 oxidized [2Fe-2S]-[ferredoxin] + 3 H2O. Its pathway is antibiotic biosynthesis; neopentalenolactone biosynthesis. Its function is as follows. Catalyzes the conversion of pentalenene to pentalen-13-al by stepwise oxidation via pentalen-13-ol, a precursor of neopentalenolactone antibiotic. The chain is Pentalenene oxygenase (ptlI) from Streptomyces avermitilis (strain ATCC 31267 / DSM 46492 / JCM 5070 / NBRC 14893 / NCIMB 12804 / NRRL 8165 / MA-4680).